The chain runs to 212 residues: ATP phosphoribosyltransferase 2 (212 aa).

This sequence belongs to the ATP phosphoribosyltransferase family. Short subfamily. Heteromultimer composed of HisG and HisZ subunits.

It is found in the cytoplasm. It carries out the reaction 1-(5-phospho-beta-D-ribosyl)-ATP + diphosphate = 5-phospho-alpha-D-ribose 1-diphosphate + ATP. The protein operates within amino-acid biosynthesis; L-histidine biosynthesis; L-histidine from 5-phospho-alpha-D-ribose 1-diphosphate: step 1/9. In terms of biological role, catalyzes the condensation of ATP and 5-phosphoribose 1-diphosphate to form N'-(5'-phosphoribosyl)-ATP (PR-ATP). Has a crucial role in the pathway because the rate of histidine biosynthesis seems to be controlled primarily by regulation of HisG enzymatic activity. The protein is ATP phosphoribosyltransferase 2 (hisG2) of Geobacter sulfurreducens (strain ATCC 51573 / DSM 12127 / PCA).